The following is a 165-amino-acid chain: DNA mimic protein DMP19 (165 aa).

This sequence belongs to the DMP19-like protein family. In terms of assembly, monomer. Homodimer. The monomeric form of DMP19 interacts with the DNA-binding protein HU homodimer with 1:1 stoichiometry. The dimeric form of DMP19 interacts with the Neisseria hypothetical transcription factor (NHTF) dimer.

Activity can be modulated in vitro by crown ethers, which are small cyclic polyethers that can modify protein surface behavior dramatically by stabilizing either intra- or intermolecular interactions, thereby probably altering the protein's tertiary and quaternary structure. Functionally, acts as a DNA mimic. Interacts with DNA-binding proteins and prevents their binding to DNA by occupying the DNA binding sites on the proteins, acting as a competitive inhibitor. DMP19 is a bifunctional DNA mimic protein involved in controlling nucleoid formation as well as gene regulation. This bifunctionality depends on different oligomeric states. The monomeric form interacts with the DNA-binding protein HU, which prevents HU from binding to DNA and forming nucleoids. The dimeric form interacts with the Neisseria hypothetical transcription factor (NHTF) and prevents NHTF from binding to its DNA-binding sites, thereby blocking its repressor activity and influencing expression of the target genes. DMP19 might use these different oligomerizations to regulate genes in two steps: the monomeric form may first release selected gene regions in chromosomal DNA by preventing HU from binding to DNA and forming nucleoids, then the dimeric form blocks the gene repressor activity of NHTF and ensures the continued expression of NHTF-controlled genes. The polypeptide is DNA mimic protein DMP19 (Neisseria meningitidis serogroup B (strain ATCC BAA-335 / MC58)).